The sequence spans 124 residues: Large ribosomal subunit protein bL12 (124 aa).

The segment at 99 to 124 (KEGMNKEDAEKAKADLEAAGAKVELK) is disordered. The span at 101-114 (GMNKEDAEKAKADL) shows a compositional bias: basic and acidic residues. Low complexity predominate over residues 115-124 (EAAGAKVELK).

Belongs to the bacterial ribosomal protein bL12 family. In terms of assembly, homodimer. Part of the ribosomal stalk of the 50S ribosomal subunit. Forms a multimeric L10(L12)X complex, where L10 forms an elongated spine to which 2 to 4 L12 dimers bind in a sequential fashion. Binds GTP-bound translation factors.

Functionally, forms part of the ribosomal stalk which helps the ribosome interact with GTP-bound translation factors. Is thus essential for accurate translation. This is Large ribosomal subunit protein bL12 from Campylobacter hominis (strain ATCC BAA-381 / DSM 21671 / CCUG 45161 / LMG 19568 / NCTC 13146 / CH001A).